A 98-amino-acid chain; its full sequence is uncharacterized protein (98 aa).

Its subcellular location is the cytoplasm. This is an uncharacterized protein from Saccharomyces cerevisiae (strain ATCC 204508 / S288c) (Baker's yeast).